The primary structure comprises 127 residues: Protein ApaG (127 aa).

The ApaG domain maps to Lys3–His127.

This is Protein ApaG from Bdellovibrio bacteriovorus (strain ATCC 15356 / DSM 50701 / NCIMB 9529 / HD100).